Reading from the N-terminus, the 205-residue chain is Nuclear transcription factor Y subunit C-6 (205 aa).

Residues 1–24 (MEPKSTTPPPPPPPPVLGAPVPYP) are disordered.

This sequence belongs to the NFYC/HAP5 subunit family. In terms of assembly, heterotrimeric transcription factor composed of three components, NF-YA, NF-YB and NF-YC. NF-YB and NF-YC must interact and dimerize for NF-YA association and DNA binding. Interacts with NFYB2. Interacts with NFYB8, NFYB10 and HD5/NFYB11.

The protein localises to the nucleus. It is found in the cytoplasm. Functionally, component of the NF-Y/HAP transcription factor complex. This chain is Nuclear transcription factor Y subunit C-6, found in Oryza sativa subsp. japonica (Rice).